We begin with the raw amino-acid sequence, 306 residues long: Dihydroorotate dehydrogenase B (NAD(+)), catalytic subunit (306 aa).

Residues Ser-22 and 46-47 (KG) each bind FMN. Residues Lys-46 and 70–74 (NAIGL) contribute to the substrate site. The FMN site is built by Asn-100 and Asn-128. Asn-128 is a substrate binding site. Cys-131 serves as the catalytic Nucleophile. FMN is bound by residues Lys-167 and Ile-193. Position 194-195 (194-195 (NT)) interacts with substrate. Residues Gly-219, 245–246 (GG), and 267–268 (GT) each bind FMN.

Belongs to the dihydroorotate dehydrogenase family. Type 1 subfamily. In terms of assembly, heterotetramer of 2 PyrK and 2 PyrD type B subunits. FMN is required as a cofactor.

The protein resides in the cytoplasm. The catalysed reaction is (S)-dihydroorotate + NAD(+) = orotate + NADH + H(+). It functions in the pathway pyrimidine metabolism; UMP biosynthesis via de novo pathway; orotate from (S)-dihydroorotate (NAD(+) route): step 1/1. In terms of biological role, catalyzes the conversion of dihydroorotate to orotate with NAD(+) as electron acceptor. The chain is Dihydroorotate dehydrogenase B (NAD(+)), catalytic subunit (pyrD) from Solidesulfovibrio magneticus (strain ATCC 700980 / DSM 13731 / RS-1) (Desulfovibrio magneticus).